Here is a 107-residue protein sequence, read N- to C-terminus: Large ribosomal subunit protein uL24 (107 aa).

It belongs to the universal ribosomal protein uL24 family. As to quaternary structure, part of the 50S ribosomal subunit.

Functionally, one of two assembly initiator proteins, it binds directly to the 5'-end of the 23S rRNA, where it nucleates assembly of the 50S subunit. Its function is as follows. One of the proteins that surrounds the polypeptide exit tunnel on the outside of the subunit. The polypeptide is Large ribosomal subunit protein uL24 (Streptomyces coelicolor (strain ATCC BAA-471 / A3(2) / M145)).